The chain runs to 149 residues: Myoglobin (149 aa).

A2 carries the N-acetylalanine modification. A Globin domain is found at 2-143 (ADWDKVNSVW…ICSDIEKEYK (142 aa)). H89 is a binding site for heme b.

The protein belongs to the globin family. Monomeric.

The protein resides in the cytoplasm. The protein localises to the sarcoplasm. The enzyme catalyses Fe(III)-heme b-[protein] + nitric oxide + H2O = Fe(II)-heme b-[protein] + nitrite + 2 H(+). It catalyses the reaction H2O2 + AH2 = A + 2 H2O. Functionally, monomeric heme protein which primary function is to store oxygen and facilitate its diffusion within muscle tissues. Reversibly binds oxygen through a pentacoordinated heme iron and enables its timely and efficient release as needed during periods of heightened demand. Depending on the oxidative conditions of tissues and cells, and in addition to its ability to bind oxygen, it also has a nitrite reductase activity whereby it regulates the production of bioactive nitric oxide. Under stress conditions, like hypoxia and anoxia, it also protects cells against reactive oxygen species thanks to its pseudoperoxidase activity. The sequence is that of Myoglobin (mb) from Galeorhinus galeus (Tope shark).